Reading from the N-terminus, the 737-residue chain is Glycogen [starch] synthase, muscle (737 aa).

Position 8 is a phosphoserine; by AMPK and PKA (Ser8). Ser11 is subject to Phosphoserine. Lys39 is a UDP binding site. Residues His205 and Arg211 each coordinate UDP-alpha-D-glucose. His291, Glu292, Gln294, His297, and Lys301 together coordinate alpha-D-glucose 6-phosphate. Arg331 contributes to the UDP binding site. Arg331 provides a ligand contact to UDP-alpha-D-glucose. Ser412 bears the Phosphoserine mark. Residue His501 participates in alpha-D-glucose 6-phosphate binding. UDP-alpha-D-glucose is bound by residues Glu510, Trp512, and Gly513. Thr515 is a UDP binding site. Alpha-D-glucose 6-phosphate is bound by residues Arg582 and Arg586. The segment at 634 to 737 (YRYPRPASVP…PTSSLGEERN (104 aa)) is disordered. Ser641 is modified (phosphoserine; by DYRK2, GSK3-alpha, GSK3-beta and PASK). A phosphoserine; by GSK3-alpha and GSK3-beta mark is found at Ser645 and Ser649. Ser652 carries the post-translational modification Phosphoserine. At Ser653 the chain carries Phosphoserine; by GSK3-alpha and GSK3-beta. Position 657 is a phosphoserine; by CK2 (Ser657). Residues 658–681 (EDEEDPRNGPLEEDGERYDEDEEA) are compositionally biased toward acidic residues. The span at 682–695 (AKDRRNIRAPEWPR) shows a compositional bias: basic and acidic residues. At Ser698 the chain carries Phosphoserine. A compositionally biased stretch (polar residues) spans 698–714 (SCTSSTSGSKRNSVDTA). Thr700 is subject to Phosphothreonine. Phosphoserine is present on Ser710. Over residues 715–737 (TSSSLSTPSEPLSPTSSLGEERN) the composition is skewed to low complexity. Thr721 carries the phosphothreonine modification. Residues Ser727 and Ser731 each carry the phosphoserine modification.

Belongs to the glycosyltransferase 3 family. In terms of assembly, part of the GYS1-GYG1 complex, a heterooctamer composed of a tetramer of GYS1 and 2 dimers of GYG1, where each GYS1 protomer binds to one GYG1 subunit (via GYG1 C-terminus); the GYS1 tetramer may dissociate from GYG1 dimers to continue glycogen polymerization on its own. In terms of processing, phosphorylation at Ser-8 by AMPK inactivates the enzyme activity. Primed phosphorylation at Ser-657 (site 5) by CSNK2A1 and CSNK2A2 is required for inhibitory phosphorylation at Ser-641 (site 3a), Ser-645 (site 3b), Ser-649 (site 3c) and Ser-653 (site 4) by GSK3A an GSK3B. Phosphorylated at Ser-641 by PASK, leading to inactivation; phosphorylation by PASK is inhibited by glycogen. Phosphorylated at Ser-641 by DYRK2, leading to inactivation. Dephosphorylation at Ser-641 and Ser-645 by PP1 activates the enzyme.

The enzyme catalyses [(1-&gt;4)-alpha-D-glucosyl](n) + UDP-alpha-D-glucose = [(1-&gt;4)-alpha-D-glucosyl](n+1) + UDP + H(+). Its pathway is glycan biosynthesis; glycogen biosynthesis. Allosteric activation by glucose-6-phosphate. Phosphorylation reduces the activity towards UDP-glucose. When in the non-phosphorylated state, glycogen synthase does not require glucose-6-phosphate as an allosteric activator; when phosphorylated it does. Glycogen synthase participates in the glycogen biosynthetic process along with glycogenin and glycogen branching enzyme. Extends the primer composed of a few glucose units formed by glycogenin by adding new glucose units to it. In this context, glycogen synthase transfers the glycosyl residue from UDP-Glc to the non-reducing end of alpha-1,4-glucan. The chain is Glycogen [starch] synthase, muscle (GYS1) from Pongo abelii (Sumatran orangutan).